The sequence spans 137 residues: Protein LTO1 homolog (137 aa).

The residue at position 2 (A2) is an N-acetylalanine. A Phosphoserine modification is found at S4. Residues 22–58 (GYREGYEEGSSLGVMEGRQHGTLHGAKIGSEIGCYQG) form a deca-GX3 motif; required for interaction with YAE1 and the CIA complex region.

Belongs to the LTO1 family. As to quaternary structure, forms a complex with YAE1. Interacts with PYCR1 and PYCR2. In terms of tissue distribution, widely expressed. Highly expressed in placenta, kidney and skeletal muscle.

The protein localises to the nucleus. The complex LTO1:YAE1 functions as a target specific adapter that probably recruits apo-ABCE1 to the cytosolic iron-sulfur protein assembly (CIA) complex machinery. May be required for biogenesis of the large ribosomal subunit and initiation of translation. May play a role in the regulation of proline metabolism and ROS production. The protein is Protein LTO1 homolog of Homo sapiens (Human).